The sequence spans 1909 residues: Receptor-type tyrosine-protein phosphatase F (1909 aa).

A signal peptide spans 1-31 (MVPNTCTSVPLLPVGLPLLLLLSCIQFSSQA). The Extracellular portion of the chain corresponds to 32–1266 (DSLPNFVRSP…RSVDQPEMLW (1235 aa)). Ig-like C2-type domains follow at residues 35 to 125 (PNFV…AKLT), 137 to 225 (PTID…ANLY), and 233 to 315 (PRFS…AQVS). Cys-56 and Cys-109 form a disulfide bridge. Residue 68 to 77 (WMKKGKKVSS) participates in heparin binding. Asn-119 carries N-linked (GlcNAc...) asparagine glycosylation. A disulfide bridge links Cys-158 with Cys-208. Residues Asn-251 and Asn-296 are each glycosylated (N-linked (GlcNAc...) asparagine). An intrachain disulfide couples Cys-254 to Cys-299. Fibronectin type-III domains follow at residues 322-412 (PPTS…TGEQ), 417-511 (PPLH…TQQG), 515-604 (QPSS…TAQS), 609-706 (PPQD…TNED), 711-819 (PPRK…TTGA), 820-914 (VPGK…PEDV), 918-1013 (FPLN…TSPA), and 1014-1098 (FATS…TAPD). The segment at 399–418 (GPPSEPVETRTGEQAPSSPP) is disordered. The N-linked (GlcNAc...) asparagine glycan is linked to Asn-721. 2 N-linked (GlcNAc...) asparagine glycosylation sites follow: Asn-963 and Asn-966. The helical transmembrane segment at 1267 to 1287 (VMGPVLAVVLIIIIVIAILLF) threads the bilayer. Topologically, residues 1288–1909 (KRKRASPLPK…YLGSFDHYAT (622 aa)) are cytoplasmic. Tyrosine-protein phosphatase domains lie at 1354–1609 (FSQE…LLEA) and 1641–1900 (MELE…ALEY). Substrate-binding positions include Asp-1518, 1550 to 1556 (CSAGVGR), and Gln-1594. Residue Cys-1550 is the Phosphocysteine intermediate of the active site. Cys-1841 functions as the Phosphocysteine intermediate in the catalytic mechanism.

The protein belongs to the protein-tyrosine phosphatase family. Receptor class 2A subfamily.

It is found in the membrane. The enzyme catalyses O-phospho-L-tyrosyl-[protein] + H2O = L-tyrosyl-[protein] + phosphate. Possible cell adhesion receptor. It possesses an intrinsic protein tyrosine phosphatase activity (PTPase). Functionally, the first PTPase domain has enzymatic activity, while the second one seems to affect the substrate specificity of the first one. This Danio rerio (Zebrafish) protein is Receptor-type tyrosine-protein phosphatase F (ptprf).